We begin with the raw amino-acid sequence, 775 residues long: Minichromosome maintenance protein 5 (775 aa).

Residues 1–22 (MSFDRPEIYSAPVLQGESPNDD) are disordered. One can recognise an MCM domain in the interval 366-573 (LYEILTNSIA…RDISIANHVI (208 aa)). 416-423 (GDPGTAKS) contacts ATP. The short motif at 548 to 551 (SRFD) is the Arginine finger element.

Belongs to the MCM family. In terms of assembly, component of the MCM2-7 complex. The complex forms a toroidal hexameric ring with the proposed subunit order MCM2-MCM6-MCM4-MCM7-MCM3-MCM5; loaded onto DNA, forms a head-head double hexamer. Interacts with CSM1.

It localises to the nucleus. The catalysed reaction is ATP + H2O = ADP + phosphate + H(+). Its function is as follows. Acts as a component of the MCM2-7 complex (MCM complex) which is the putative replicative helicase essential for 'once per cell cycle' DNA replication initiation and elongation in eukaryotic cells. The active ATPase sites in the MCM2-7 ring are formed through the interaction surfaces of two neighboring subunits such that a critical structure of a conserved arginine finger motif is provided in trans relative to the ATP-binding site of the Walker A box of the adjacent subunit. The six ATPase active sites, however, are likely to contribute differentially to the complex helicase activity; specifically the MCM2-MCM5 association is proposed to be reversible and to mediate a open ring conformation which may facilitate DNA loading. Once loaded onto DNA, double hexamers can slide on dsDNA in the absence of ATPase activity. The polypeptide is Minichromosome maintenance protein 5 (MCM5) (Saccharomyces cerevisiae (strain ATCC 204508 / S288c) (Baker's yeast)).